The sequence spans 297 residues: Juvenile hormone acid O-methyltransferase (297 aa).

Belongs to the methyltransferase superfamily. Predominantly expressed in corpora allata. Also expressed at low level in testis.

It carries out the reaction (2E,6E)-farnesoate + S-adenosyl-L-methionine = methyl (2E,6E)-farnesoate + S-adenosyl-L-homocysteine. The catalysed reaction is juvenile hormone III carboxylate + S-adenosyl-L-methionine = juvenile hormone III + S-adenosyl-L-homocysteine. Its function is as follows. O-methyltransferase that transfers a methyl group from S-adenosyl-L-methionine (SAM) to the carboxyl group of juvenile hormone acids to produce active juvenile hormones in the corpora allata, the last step during juvenile hormone biosynthesis. Also able to methylate farnesoate to methyl farnesoate. This Drosophila melanogaster (Fruit fly) protein is Juvenile hormone acid O-methyltransferase.